Consider the following 200-residue polypeptide: MAAGKARIGHLAPGFTAKAVMPDGQFKDISMSDYRGKYVVFFFYPLDFTFVCPTEIIAFSDAAEEFRKIGCEVIGASVDSHFCHLAWTNTPRKHGGLGAMKIPLVADTMRSISTDYGVFEGGMRASPTGGLFIIDDKGVLRQITINDLPVGRCVDEILRLVQAFQFTDKHGEVCPAGWKPGSDTIKPDVQKSKDFFSKQQ.

The region spanning 6-166 (ARIGHLAPGF…ILRLVQAFQF (161 aa)) is the Thioredoxin domain. C52 functions as the Cysteine sulfenic acid (-SOH) intermediate in the catalytic mechanism.

This sequence belongs to the peroxiredoxin family. AhpC/Prx1 subfamily. As to quaternary structure, homodimer; disulfide-linked, upon oxidation.

It carries out the reaction a hydroperoxide + [thioredoxin]-dithiol = an alcohol + [thioredoxin]-disulfide + H2O. Thiol-specific peroxidase that catalyzes the reduction of hydrogen peroxide and organic hydroperoxides to water and alcohols, respectively. Plays a role in cell protection against oxidative stress by detoxifying peroxides and as sensor of hydrogen peroxide-mediated signaling events. The polypeptide is Peroxiredoxin (Oncorhynchus mykiss (Rainbow trout)).